The sequence spans 227 residues: Ras-related protein Rab-3C (227 aa).

GTP is bound by residues serine 39, glycine 42, lysine 43, threonine 44, serine 45, threonine 56, serine 57, serine 61, and threonine 62. Threonine 44 provides a ligand contact to Mg(2+). The Switch 1 motif lies at 53 to 66; it reads DSFTSAFVSTVGID. Positions 62 and 85 each coordinate Mg(2+). Threonine 86 is modified (phosphothreonine; by LRRK2). The Switch 2 motif lies at 86-104; it reads TAGQERYRTITTAYYRGAM. Positions 88, 143, 144, 146, 174, and 175 each coordinate GTP. Residues serine 196 and serine 198 each carry the phosphoserine modification. A disordered region spans residues 202 to 227; the sequence is DPAITAAKQSTRLKETPPPPQPNCGC. Threonine 206 carries the post-translational modification Phosphothreonine. Positions 217–227 are enriched in pro residues; the sequence is TPPPPQPNCGC. 2 S-geranylgeranyl cysteine lipidation sites follow: cysteine 225 and cysteine 227. Cysteine 227 carries the cysteine methyl ester modification.

This sequence belongs to the small GTPase superfamily. Rab family. As to quaternary structure, interacts with RIMS1, RIMS2, RPH3A and RPH3AL. Interacts with GDI2, CHM and CHML; phosphorylation at Thr-86 disrupts these interactions. Interacts with MADD (via uDENN domain); the GTP-bound form is preferred for interaction. Requires Mg(2+) as cofactor. Phosphorylation of Thr-86 in the switch II region by LRRK2 prevents the association of RAB regulatory proteins, including CHM, CHML and RAB GDP dissociation inhibitor GDI2.

Its subcellular location is the cell membrane. It carries out the reaction GTP + H2O = GDP + phosphate + H(+). Its activity is regulated as follows. Regulated by guanine nucleotide exchange factors (GEFs) which promote the exchange of bound GDP for free GTP. Regulated by GTPase activating proteins (GAPs) which increase the GTP hydrolysis activity. Inhibited by GDP dissociation inhibitors (GDIs) which prevent Rab-GDP dissociation. Functionally, the small GTPases Rab are key regulators of intracellular membrane trafficking, from the formation of transport vesicles to their fusion with membranes. Rabs cycle between an inactive GDP-bound form and an active GTP-bound form that is able to recruit to membranes different sets of downstream effectors directly responsible for vesicle formation, movement, tethering and fusion. This is Ras-related protein Rab-3C from Mus musculus (Mouse).